A 247-amino-acid chain; its full sequence is tRNA pseudouridine synthase A (247 aa).

Asp52 acts as the Nucleophile in catalysis. Tyr110 contributes to the substrate binding site.

The protein belongs to the tRNA pseudouridine synthase TruA family. As to quaternary structure, homodimer.

It catalyses the reaction uridine(38/39/40) in tRNA = pseudouridine(38/39/40) in tRNA. Functionally, formation of pseudouridine at positions 38, 39 and 40 in the anticodon stem and loop of transfer RNAs. In Geobacter sp. (strain M21), this protein is tRNA pseudouridine synthase A.